The sequence spans 989 residues: Putative transcription elongation factor SPT5 homolog 2 (989 aa).

The segment covering 1 to 26 (MSQYSDDDYSHEDDSEMEDEDEEDEY) has biased composition (acidic residues). Positions 1-82 (MSQYSDDDYS…VEDDDDDVDV (82 aa)) are disordered. A compositionally biased stretch (basic residues) spans 31–42 (SRKGRSGKKRGR). The span at 65–82 (WEVEVDDDVEDDDDDVDV) shows a compositional bias: acidic residues. KOW domains follow at residues 260–287 (DLSR…VDNV), 412–439 (HFMK…VDEE), 464–491 (YFEP…VDQH), 588–615 (VVAV…IYKG), and 683–710 (DHLV…VKDK). Residues 790-852 (MSPPRDNWED…SPMTPSSTSY (63 aa)) form a disordered region. The span at 842-852 (PSPMTPSSTSY) shows a compositional bias: low complexity. In terms of domain architecture, KOW 6 spans 936–963 (CPKKNERVKILGGKYCGSTAKVIGEDGQ).

Belongs to the SPT5 family.

It is found in the nucleus. In terms of biological role, may regulate transcription elongation by RNA polymerase II. May enhance transcriptional pausing at sites proximal to the promoter, which may in turn facilitate the assembly of an elongation competent RNA polymerase II complex. The polypeptide is Putative transcription elongation factor SPT5 homolog 2 (Arabidopsis thaliana (Mouse-ear cress)).